The chain runs to 652 residues: Endoplasmic reticulum chaperone BiP (652 aa).

The signal sequence occupies residues 1–16; the sequence is MRHLLLALLLLGGARA. Residues 34–37, Lys94, 225–227, 291–298, and 362–365 each bind ATP; these read GTTY, GGT, EKAKRALS, and GSTR. The tract at residues 123–278 is nucleotide-binding (NBD); it reads KPHIQVDVGG…KKKTGKDVRK (156 aa). The interdomain linker stretch occupies residues 407-417; that stretch reads QDTGDLVLLDV. The segment at 418–498 is substrate-binding (SBD); the sequence is CPLTLGIETV…PRGVPQIEVT (81 aa). Residues 630–652 form a disordered region; it reads SKLYGSAGPPPTGEEEAAEKDEL. Residues 642 to 652 are compositionally biased toward acidic residues; the sequence is GEEEAAEKDEL. The Prevents secretion from ER signature appears at 649 to 652; the sequence is KDEL.

It belongs to the heat shock protein 70 family. Monomer and homooligomer; homooligomerization via the interdomain linker inactivates the chaperone activity and acts as a storage of HSPA5/BiP molecules. Interacts with DNAJC10. Interacts with DNAJB9/ERdj4; leading to recruit HSPA5/BiP to ERN1/IRE1. Interacts with ERN1/IRE1; interaction takes place following interaction with DNAJB9/ERdj4 and leads to inactivate ERN1/IRE1.

Its subcellular location is the endoplasmic reticulum lumen. It localises to the melanosome. The protein resides in the cytoplasm. It is found in the cell surface. It catalyses the reaction ATP + H2O = ADP + phosphate + H(+). The chaperone activity is regulated by ATP-induced allosteric coupling of the nucleotide-binding (NBD) and substrate-binding (SBD) domains. In the ADP-bound and nucleotide-free (apo) states, the two domains have little interaction. In contrast, in the ATP-bound state the two domains are tightly coupled, which results in drastically accelerated kinetics in both binding and release of polypeptide substrates. J domain-containing co-chaperones (DNAJB9/ERdj4 or DNAJC10/ERdj5) stimulate the ATPase activity and are required for efficient substrate recognition by HSPA5/BiP. Homooligomerization inactivates participating HSPA5/BiP protomers and probably act as reservoirs to store HSPA5/BiP molecules when they are not needed by the cell. Functionally, endoplasmic reticulum chaperone that plays a key role in protein folding and quality control in the endoplasmic reticulum lumen. Involved in the correct folding of proteins and degradation of misfolded proteins via its interaction with DNAJC10/ERdj5, probably to facilitate the release of DNAJC10/ERdj5 from its substrate. Acts as a key repressor of the EIF2AK3/PERK and ERN1/IRE1-mediated unfolded protein response (UPR). In the unstressed endoplasmic reticulum, recruited by DNAJB9/ERdj4 to the luminal region of ERN1/IRE1, leading to disrupt the dimerization of ERN1/IRE1, thereby inactivating ERN1/IRE1. Also binds and inactivates EIF2AK3/PERK in unstressed cells. Accumulation of misfolded protein in the endoplasmic reticulum causes release of HSPA5/BiP from ERN1/IRE1 and EIF2AK3/PERK, allowing their homodimerization and subsequent activation. May also play a role in apoptosis and cell proliferation. The polypeptide is Endoplasmic reticulum chaperone BiP (Gallus gallus (Chicken)).